The following is a 180-amino-acid chain: Large ribosomal subunit protein bL17 (180 aa).

The interval 134–180 (AQAKAKKAAAMPTEESEAKPAEEGDVVGASEPDAKAPEEPPTEAPEN) is disordered.

Belongs to the bacterial ribosomal protein bL17 family. As to quaternary structure, part of the 50S ribosomal subunit. Contacts protein L32.

This is Large ribosomal subunit protein bL17 from Mycobacterium tuberculosis (strain CDC 1551 / Oshkosh).